Reading from the N-terminus, the 127-residue chain is Holo-[acyl-carrier-protein] synthase (127 aa).

Residues D8 and E57 each contribute to the Mg(2+) site.

The protein belongs to the P-Pant transferase superfamily. AcpS family. Mg(2+) serves as cofactor.

Its subcellular location is the cytoplasm. The catalysed reaction is apo-[ACP] + CoA = holo-[ACP] + adenosine 3',5'-bisphosphate + H(+). Transfers the 4'-phosphopantetheine moiety from coenzyme A to a Ser of acyl-carrier-protein. This Hydrogenovibrio crunogenus (strain DSM 25203 / XCL-2) (Thiomicrospira crunogena) protein is Holo-[acyl-carrier-protein] synthase.